The sequence spans 499 residues: MFSRRNLVALGLAATVSAGPCDIYEAGDTPCVAAHSTTRALYSSFSGALYQLQRGSDDTTTTISPLTAGGVADASAQDTFCANTTCLITIIYDQSGNGNHLTQAPPGGFDGPDVDGYDNLASAIGAPVTLNGQKAYGVFMSPGTGYRNNEATGTATGDEPEGMYAVLDGTHYNDACCFDYGNAETSSTDTGAGHMEAIYLGNSTTWGYGAGDGPWIMVDMENNLFSGADEGYNSGDPSISYSFVTAAVKGGADKWAIRGGNAASGSLSTYYSGARPDYSGYNPMSKEGAIILGIGGDNSNGAQGTFYEGVMTSGYPSDDVENSVQENIVAAKYVSGSLVSGPSFTSGEVVSLRVTTPGYTTRYIAHTDTTVNTQVVDDDSSTTLKEEASWTVVTGLANSQCFSFESVDTPGSYIRHYNFELLLNANDGTKQFHEDATFCPQAPLNGEGTSLRSWSYPTRYFRHYENVLYAASNGGVQTFDSKTSFNNDVSFEIETAFAS.

The N-terminal stretch at 1 to 18 is a signal peptide; it reads MFSRRNLVALGLAATVSA. Residues Asn-83 and Asn-202 are each glycosylated (N-linked (GlcNAc...) asparagine).

This sequence belongs to the glycosyl hydrolase 54 family.

The enzyme catalyses Hydrolysis of terminal non-reducing alpha-L-arabinofuranoside residues in alpha-L-arabinosides.. The protein operates within glycan metabolism; L-arabinan degradation. Its function is as follows. Able to hydrolyze 1,5-, 1,3- and 1,2-alpha-linkages not only in L-arabinofuranosyl oligosaccharides, but also in polysac-charides containing terminal non-reducing L-arabinofuranoses in side chains, like L-arabinan, arabinogalactan and arabinoxylan. The polypeptide is Alpha-L-arabinofuranosidase B (abfB) (Aspergillus niger).